The primary structure comprises 152 residues: Large ribosomal subunit protein bL9 (152 aa).

Belongs to the bacterial ribosomal protein bL9 family.

Binds to the 23S rRNA. This chain is Large ribosomal subunit protein bL9, found in Mycobacterium sp. (strain JLS).